Consider the following 99-residue polypeptide: MVKAPRGYRHRTRKVFSKHIREKGAVPPLSLLMIDYKPGDKVHIVVNPAIHKGMPHRRYHGKTGTIIGKRGKAYIVKITLGDKEKTLFIRPEHLRPAKA.

Belongs to the eukaryotic ribosomal protein eL21 family.

The sequence is that of Large ribosomal subunit protein eL21 from Staphylothermus marinus (strain ATCC 43588 / DSM 3639 / JCM 9404 / F1).